Consider the following 316-residue polypeptide: Porphobilinogen deaminase (316 aa).

An S-(dipyrrolylmethanemethyl)cysteine modification is found at Cys-245.

It belongs to the HMBS family. As to quaternary structure, monomer. Requires dipyrromethane as cofactor.

It carries out the reaction 4 porphobilinogen + H2O = hydroxymethylbilane + 4 NH4(+). It participates in porphyrin-containing compound metabolism; protoporphyrin-IX biosynthesis; coproporphyrinogen-III from 5-aminolevulinate: step 2/4. It functions in the pathway porphyrin-containing compound metabolism; chlorophyll biosynthesis. In terms of biological role, tetrapolymerization of the monopyrrole PBG into the hydroxymethylbilane pre-uroporphyrinogen in several discrete steps. The sequence is that of Porphobilinogen deaminase from Synechococcus sp. (strain CC9311).